We begin with the raw amino-acid sequence, 180 residues long: Shikimate kinase (180 aa).

14 to 19 provides a ligand contact to ATP; sequence GAGKST. S18 is a Mg(2+) binding site. The substrate site is built by D36, R60, and G82. R120 serves as a coordination point for ATP. Residue R139 coordinates substrate.

Belongs to the shikimate kinase family. As to quaternary structure, monomer. Mg(2+) is required as a cofactor.

It localises to the cytoplasm. The catalysed reaction is shikimate + ATP = 3-phosphoshikimate + ADP + H(+). The protein operates within metabolic intermediate biosynthesis; chorismate biosynthesis; chorismate from D-erythrose 4-phosphate and phosphoenolpyruvate: step 5/7. Its function is as follows. Catalyzes the specific phosphorylation of the 3-hydroxyl group of shikimic acid using ATP as a cosubstrate. The polypeptide is Shikimate kinase (Chromohalobacter salexigens (strain ATCC BAA-138 / DSM 3043 / CIP 106854 / NCIMB 13768 / 1H11)).